The sequence spans 294 residues: Syntaxin-19 (294 aa).

Residues 209 to 271 (LSEIEQRHKE…NNTKEKFGLA (63 aa)) enclose the t-SNARE coiled-coil homology domain.

Belongs to the syntaxin family. As to quaternary structure, interacts with EGFR.

It localises to the cell membrane. It is found in the cytoplasm. Plays a role in endosomal trafficking of the epidermal growth factor receptor (EGFR). This Pongo abelii (Sumatran orangutan) protein is Syntaxin-19 (STX19).